The sequence spans 440 residues: Trigger factor (440 aa).

Residues 160-253 (KDTVIGDALR…VTEVKRLELP (94 aa)) enclose the PPIase FKBP-type domain.

It belongs to the FKBP-type PPIase family. Tig subfamily.

It is found in the cytoplasm. The catalysed reaction is [protein]-peptidylproline (omega=180) = [protein]-peptidylproline (omega=0). Functionally, involved in protein export. Acts as a chaperone by maintaining the newly synthesized protein in an open conformation. Functions as a peptidyl-prolyl cis-trans isomerase. The protein is Trigger factor of Chlorobium chlorochromatii (strain CaD3).